We begin with the raw amino-acid sequence, 3014 residues long: MAPPPPPVLPVLLLLAAAAALPAMGLRAAAWEPRVPGGTRAFALRPGCTYAVGAACTPRAPRELLDVGRDGRLAGRRRVSGAGRPLPLQVRLVARSAPTALSRRLRARTHLPGCGARARLCGTGARLCGALCFPVPGGCAAAQHSALAAPTTLPACRCPPRPRPRCPGRPICLPPGGSVRLRLLCALRRAAGAVRVGLALEAATAGTPSASPSPSPPLPPNLPEARAGPARRARRGTSGRGSLKFPMPNYQVALFENEPAGTLILQLHAHYTIEGEEERVSYYMEGLFDERSRGYFRIDSATGAVSTDSVLDRETKETHVLRVKAVDYSTPPRSATTYITVLVKDTNDHSPVFEQSEYRERVRENLEVGYEVLTIRASDRDSPINANLRYRVLGGAWDVFQLNESSGVVSTRAVLDREEAAEYQLLVEANDQGRNPGPLSATATVYIEVEDENDNYPQFSEQNYVVQVPEDVGLNTAVLRVQATDRDQGQNAAIHYSILSGNVAGQFYLHSLSGILDVINPLDFEDVQKYSLSIKAQDGGRPPLINSSGVVSVQVLDVNDNEPIFVSSPFQATVLENVPLGYPVVHIQAVDADSGENARLHYRLVDTASTFLGGGSAGPKNPAPTPDFPFQIHNSSGWITVCAELDREEVEHYSFGVEAVDHGSPPMSSSTSVSITVLDVNDNDPVFTQPTYELRLNEDAAVGSSVLTLQARDRDANSVITYQLTGGNTRNRFALSSQRGGGLITLALPLDYKQEQQYVLAVTASDGTRSHTAHVLINVTDANTHRPVFQSSHYTVSVSEDRPVGTSIATLSANDEDTGENARITYVIQDPVPQFRIDPDSGTMYTMMELDYENQVAYTLTIMAQDNGIPQKSDTTTLEILILDANDNAPQFLWDFYQGSIFEDAPPSTSILQVSATDRDSGPNGRLLYTFQGGDDGDGDFYIEPTSGVIRTQRRLDRENVAVYNLWALAVDRGSPTPLSASVEIQVTILDINDNAPMFEKDELELFVEENNPVGSVVAKIRANDPDEGPNAQIMYQIVEGDMRHFFQLDLLNGDLRAMVELDFEVRREYVLVVQATSAPLVSRATVHILLVDQNDNPPVLPDFQILFNNYVTNKSNSFPTGVIGCIPAHDPDVSDSLNYTFVQGNELRLLLLDPATGELQLSRDLDNNRPLEALMEVSVSDGIHSVTAFCTLRVTIITDDMLTNSITVRLENMSQEKFLSPLLALFVEGVAAVLSTTKDDVFVFNVQNDTDVSSNILNVTFSALLPGGVRGQFFPSEDLQEQIYLNRTLLTTISTQRVLPFDDNICLREPCENYMKCVSVLRFDSSAPFLSSTTVLFRPIHPINGLRCRCPPGFTGDYCETEIDLCYSDPCGANGRCRSREGGYTCECFEDFTGEHCEVDARSGRCANGVCKNGGTCVNLLIGGFHCVCPPGEYERPYCEVTTRSFPPQSFVTFRGLRQRFHFTISLTFATQERNGLLLYNGRFNEKHDFIALEIVDEQVQLTFSAGETTTTVAPKVPSGVSDGRWHSVQVQYYNKPNIGHLGLPHGPSGEKMAVVTVDDCDTTMAVRFGKDIGNYSCAAQGTQTGSKKSLDLTGPLLLGGVPNLPEDFPVHNRQFVGCMRNLSVDGKNVDMAGFIANNGTREGCAARRNFCDGRRCQNGGTCVNRWNMYLCECPLRFGGKNCEQAMPHPQLFSGESVVSWSDLNIIISVPWYLGLMFRTRKEDSVLMEATSGGPTSFRLQILNNYLQFEVSHGPSDVESVMLSGLRVTDGEWHHLLIELKNVKEDSEMKHLVTMTLDYGMDQNKADIGGMLPGLTVRSVVVGGASEDKVSVRRGFRGCMQGVRMGGTPTNVATLNMNNALKVRVKDGCDVDDPCTSSPCPPNSRCHDAWEDYSCVCDKGYLGINCVDACHLNPCENMGACVRSPGSPQGYVCECGPSHYGPYCENKLDLPCPRGWWGNPVCGPCHCAVSKGFDPDCNKTNGQCQCKENYYKLLAQDTCLPCDCFPHGSHSRTCDMATGQCACKPGVIGRQCNRCDNPFAEVTTLGCEVIYNGCPKAFEAGIWWPQTKFGQPAAVPCPKGSVGNAVRHCSGEKGWLPPELFNCTTISFVDLRAMNEKLSRNETQVDGARALQLVRALRSATQHTGTLFGNDVRTAYQLLGHVLQHESWQQGFDLAATQDADFHEDVIHSGSALLAPATRAAWEQIQRSEGGTAQLLRRLEGYFSNVARNVRRTYLRPFVIVTANMILAVDIFDKFNFTGARVPRFDTIHEEFPRELESSVSFPADFFRPPEEKEGPLLRPAGRRTTPQTTRPGPGTEREAPISRRRRHPDDAGQFAVALVIIYRTLGQLLPERYDPDRRSLRLPHRPIINTPMVSTLVYSEGAPLPRPLERPVLVEFALLEVEERTKPVCVFWNHSLAVGGTGGWSARGCELLSRNRTHVACQCSHTASFAVLMDISRRENGEVLPLKIVTYAAVSLSLAALLVAFVLLSLVRMLRSNLHSIHKHLAVALFLSQLVFVIGINQTENPFLCTVVAILLHYIYMSTFAWTLVESLHVYRMLTEVRNIDTGPMRFYYVVGWGIPAIVTGLAVGLDPQGYGNPDFCWLSLQDTLIWSFAGPIGAVIIINTVTSVLSAKVSCQRKHHYYGKKGIVSLLRTAFLLLLLISATWLLGLLAVNRDALSFHYLFAIFSGLQGPFVLLFHCVLNQEVRKHLKGVLGGRKLHLEDSATTRATLLTRSLNCNTTFGDGPDMLRTDLGESTASLDSIVRDEGIQKLGVSSGLVRGSHGEPDASLMPRSCKDPPGHDSDSDSELSLDEQSSSYASSHSSDSEDDGVGAEEKWDPARGAVHSTPKGDAVANHVPAGWPDQSLAESDSEDPSGKPRLKVETKVSVELHREEQGSHRGEYPPDQESGGAARLASSQPPEQRKGILKNKVTYPPPLTLTEQTLKGRLREKLADCEQSPTSSRTSSLGSGGPDCAITVKSPGREPGRDHLNGVAMNVRTGSAQADGSDSEKP.

The signal sequence occupies residues 1–20 (MAPPPPPVLPVLLLLAAAAA). Over 22–2469 (PAMGLRAAAW…RENGEVLPLK (2448 aa)) the chain is Extracellular. Residues 205–242 (AGTPSASPSPSPPLPPNLPEARAGPARRARRGTSGRGS) are disordered. Residues 211-222 (SPSPSPPLPPNL) are compositionally biased toward pro residues. 9 Cadherin domains span residues 246–353 (PMPN…SPVF), 354–459 (EQSE…YPQF), 460–565 (SEQN…EPIF), 566–687 (VSSP…DPVF), 688–789 (TQPT…RPVF), 790–892 (QSSH…APQF), 893–999 (LWDF…APMF), 1000–1101 (EKDE…PPVL), and 1106–1224 (ILFN…SPLL). Asn-403, Asn-546, Asn-634, and Asn-778 each carry an N-linked (GlcNAc...) asparagine glycan. 6 N-linked (GlcNAc...) asparagine glycosylation sites follow: Asn-1114, Asn-1139, Asn-1213, Asn-1249, Asn-1259, and Asn-1287. The 59-residue stretch at 1303–1361 (DDNICLREPCENYMKCVSVLRFDSSAPFLSSTTVLFRPIHPINGLRCRCPPGFTGDYCE) folds into the EGF-like 1; calcium-binding domain. 9 cysteine pairs are disulfide-bonded: Cys-1307–Cys-1318, Cys-1312–Cys-1349, Cys-1351–Cys-1360, Cys-1367–Cys-1378, Cys-1372–Cys-1387, Cys-1389–Cys-1398, Cys-1407–Cys-1418, Cys-1412–Cys-1428, and Cys-1430–Cys-1440. The 37-residue stretch at 1363-1399 (EIDLCYSDPCGANGRCRSREGGYTCECFEDFTGEHCE) folds into the EGF-like 2; calcium-binding domain. The 39-residue stretch at 1403–1441 (RSGRCANGVCKNGGTCVNLLIGGFHCVCPPGEYERPYCE) folds into the EGF-like 3; calcium-binding domain. Residues 1442-1646 (VTTRSFPPQS…IANNGTREGC (205 aa)) enclose the Laminin G-like 1 domain. Asn-1576, Asn-1623, and Asn-1640 each carry an N-linked (GlcNAc...) asparagine glycan. 13 cysteine pairs are disulfide-bonded: Cys-1620-Cys-1646, Cys-1653-Cys-1664, Cys-1658-Cys-1673, Cys-1675-Cys-1684, Cys-1840-Cys-1870, Cys-1876-Cys-1887, Cys-1881-Cys-1896, Cys-1898-Cys-1907, Cys-1911-Cys-1922, Cys-1916-Cys-1934, Cys-1936-Cys-1945, Cys-1953-Cys-1966, and Cys-1968-Cys-1978. Residues 1649–1685 (RRNFCDGRRCQNGGTCVNRWNMYLCECPLRFGGKNCE) form the EGF-like 4; calcium-binding domain. Asn-1666 is subject to (3R)-3-hydroxyasparagine. Residues 1689 to 1870 (PHPQLFSGES…ALKVRVKDGC (182 aa)) enclose the Laminin G-like 2 domain. The 36-residue stretch at 1872-1907 (VDDPCTSSPCPPNSRCHDAWEDYSCVCDKGYLGINC) folds into the EGF-like 5; calcium-binding domain. A (3R)-3-hydroxyaspartate modification is found at Asp-1889. One can recognise an EGF-like 6; calcium-binding domain in the interval 1908 to 1946 (VDACHLNPCENMGACVRSPGSPQGYVCECGPSHYGPYCE). In terms of domain architecture, EGF-like 7; calcium-binding spans 1947–1979 (NKLDLPCPRGWWGNPVCGPCHCAVSKGFDPDCN). Asn-1979 is a glycosylation site (N-linked (GlcNAc...) asparagine). An EGF-like 8; calcium-binding domain is found at 1981 to 2016 (TNGQCQCKENYYKLLAQDTCLPCDCFPHGSHSRTCD). Disulfide bonds link Cys-1985/Cys-2000, Cys-1987/Cys-2003, Cys-2005/Cys-2015, Cys-2024/Cys-2033, and Cys-2036/Cys-2048. The Laminin EGF-like domain occupies 2003–2050 (CDCFPHGSHSRTCDMATGQCACKPGVIGRQCNRCDNPFAEVTTLGCEV). 3 N-linked (GlcNAc...) asparagine glycosylation sites follow: Asn-2103, Asn-2122, and Asn-2257. The disordered stretch occupies residues 2291-2328 (PEEKEGPLLRPAGRRTTPQTTRPGPGTEREAPISRRRR). A GAIN-B domain is found at 2297-2461 (PLLRPAGRRT…AVLMDISRRE (165 aa)). Residues 2300-2316 (RPAGRRTTPQTTRPGPG) are compositionally biased toward low complexity. Intrachain disulfides connect Cys-2411–Cys-2443 and Cys-2431–Cys-2445. The tract at residues 2411-2461 (CVFWNHSLAVGGTGGWSARGCELLSRNRTHVACQCSHTASFAVLMDISRRE) is GPS. N-linked (GlcNAc...) asparagine glycans are attached at residues Asn-2415 and Asn-2437. Residues 2470–2490 (IVTYAAVSLSLAALLVAFVLL) form a helical membrane-spanning segment. At 2491-2501 (SLVRMLRSNLH) the chain is on the cytoplasmic side. Residues 2502-2522 (SIHKHLAVALFLSQLVFVIGI) traverse the membrane as a helical segment. The N-linked (GlcNAc...) asparagine glycan is linked to Asn-2523. Residues 2523–2527 (NQTEN) lie on the Extracellular side of the membrane. A helical membrane pass occupies residues 2528–2548 (PFLCTVVAILLHYIYMSTFAW). Over 2549–2572 (TLVESLHVYRMLTEVRNIDTGPMR) the chain is Cytoplasmic. The helical transmembrane segment at 2573–2593 (FYYVVGWGIPAIVTGLAVGLD) threads the bilayer. Over 2594-2611 (PQGYGNPDFCWLSLQDTL) the chain is Extracellular. A helical membrane pass occupies residues 2612-2632 (IWSFAGPIGAVIIINTVTSVL). At 2633–2655 (SAKVSCQRKHHYYGKKGIVSLLR) the chain is on the cytoplasmic side. Residues 2656-2676 (TAFLLLLLISATWLLGLLAVN) form a helical membrane-spanning segment. Residues 2677-2683 (RDALSFH) are Extracellular-facing. The chain crosses the membrane as a helical span at residues 2684–2704 (YLFAIFSGLQGPFVLLFHCVL). The Cytoplasmic portion of the chain corresponds to 2705 to 3014 (NQEVRKHLKG…QADGSDSEKP (310 aa)). Phosphoserine occurs at positions 2761 and 2764. Disordered stretches follow at residues 2777–2939 (SSGL…PPPL) and 2954–3014 (LADC…SEKP). Residues 2796–2806 (SCKDPPGHDSD) are compositionally biased toward basic and acidic residues. Over residues 2814–2825 (DEQSSSYASSHS) the composition is skewed to low complexity. 2 positions are modified to phosphoserine: Ser-2871 and Ser-2873. Residues 2876 to 2904 (PSGKPRLKVETKVSVELHREEQGSHRGEY) show a composition bias toward basic and acidic residues. Low complexity predominate over residues 2960–2969 (SPTSSRTSSL). Residues 2983-2992 (PGREPGRDHL) show a composition bias toward basic and acidic residues.

This sequence belongs to the G-protein coupled receptor 2 family. LN-TM7 subfamily. The iron and 2-oxoglutarate dependent 3-hydroxylation of aspartate and asparagine is (R) stereospecific within EGF domains.

The protein localises to the cell membrane. In terms of biological role, receptor that may have an important role in cell/cell signaling during nervous system formation. This is Cadherin EGF LAG seven-pass G-type receptor 1 (CELSR1) from Homo sapiens (Human).